The following is a 127-amino-acid chain: Aspartate 1-decarboxylase (127 aa).

The Schiff-base intermediate with substrate; via pyruvic acid role is filled by Ser25. Ser25 is modified (pyruvic acid (Ser)). Position 57 (Thr57) interacts with substrate. Tyr58 (proton donor) is an active-site residue. 73 to 75 provides a ligand contact to substrate; it reads GAA.

This sequence belongs to the PanD family. Heterooctamer of four alpha and four beta subunits. It depends on pyruvate as a cofactor. Post-translationally, is synthesized initially as an inactive proenzyme, which is activated by self-cleavage at a specific serine bond to produce a beta-subunit with a hydroxyl group at its C-terminus and an alpha-subunit with a pyruvoyl group at its N-terminus.

The protein localises to the cytoplasm. It carries out the reaction L-aspartate + H(+) = beta-alanine + CO2. It participates in cofactor biosynthesis; (R)-pantothenate biosynthesis; beta-alanine from L-aspartate: step 1/1. Catalyzes the pyruvoyl-dependent decarboxylation of aspartate to produce beta-alanine. This is Aspartate 1-decarboxylase from Trichormus variabilis (strain ATCC 29413 / PCC 7937) (Anabaena variabilis).